The following is an 83-amino-acid chain: UPF0297 protein CLK_1948 (83 aa).

This sequence belongs to the UPF0297 family.

In Clostridium botulinum (strain Loch Maree / Type A3), this protein is UPF0297 protein CLK_1948.